The chain runs to 433 residues: Myricetin 3-O-glucosyl 1,2-rhamnoside 6'-O-caffeoyltransferase AT2 (433 aa).

Residues His157 and Asp375 each act as proton acceptor in the active site.

This sequence belongs to the plant acyltransferase family. As to expression, expressed in young cromes.

The enzyme catalyses myricetin 3-O-[beta-D-glucosyl-(1-&gt;2)-alpha-L-rhamnoside] + (E)-caffeoyl-CoA = myricetin 3-O-[(6-O-(E)-caffeoyl-beta-D-glucosyl)-(1-&gt;2)-alpha-L-rhamnoside] + CoA. It functions in the pathway flavonoid metabolism. In terms of biological role, caffeoyltransferase involved in montbretin A (MbA) biosynthesis. Catalyzes the caffeoylation of myricetin 3-O-beta-D-glucosyl 1,2-alpha-L-rhamnoside (MRG) to produce myricetin 3-O-(6'-O-caffeoyl)-beta-D-glucosyl 1,2-alpha-L-rhamnoside (mini-MbA), a precursor of MbA. Mini-MbA and MbA are potent inhibitors of human pancreatic alpha-amylase and are being developed as drug candidates to treat type-2 diabetes. In vitro, is able to catalyze the caffeoylation of quercetin 3-O-sophoroside (QGG), although QGG may not be a physiological substrate in vivo. In vitro, can use coumaryl-CoA, feruloyl-CoA and acetyl-CoA, although these three acyl donors may not be physiological in vivo. This chain is Myricetin 3-O-glucosyl 1,2-rhamnoside 6'-O-caffeoyltransferase AT2, found in Crocosmia x crocosmiiflora (Montbretia).